Consider the following 318-residue polypeptide: tRNA dimethylallyltransferase (318 aa).

Gly21 to Ser28 contributes to the ATP binding site. Residue Thr23–Ser28 coordinates substrate. Residues Asp46–Gln49 are interaction with substrate tRNA.

It belongs to the IPP transferase family. As to quaternary structure, monomer. Mg(2+) serves as cofactor.

The catalysed reaction is adenosine(37) in tRNA + dimethylallyl diphosphate = N(6)-dimethylallyladenosine(37) in tRNA + diphosphate. Catalyzes the transfer of a dimethylallyl group onto the adenine at position 37 in tRNAs that read codons beginning with uridine, leading to the formation of N6-(dimethylallyl)adenosine (i(6)A). The protein is tRNA dimethylallyltransferase of Acidothermus cellulolyticus (strain ATCC 43068 / DSM 8971 / 11B).